The primary structure comprises 502 residues: MGKYVLGVDLGTSAVKVSALDHSGQIVAQESFDYDLIQKQPGYNEQNPEDWVSGTTVAIVRLILNDHLDASNIEGLSYSGQMHGLVLLDENKKVLRPAILWNDTRSTPQREEIEAKLGDEFVHITRNQPLEGFTLTKLLWVKQNEPDIWAKAKYFVLPKDYVRYRMTGNLAMDYSDATGTVLLDVAKGEWSQKICAALDIPMSMCPPLIKSIDLAGTVTPAYAEFSGLTTDTKVFGGAADNAAGAVGAGILHPNMVLSSIGTSGVVLKYEDNADVNYHGVLQFEDHAIPDKFYSMGVTLAAGYSFTWFKKTFAPAEDFTDVVASAAKSTVGANGLLYTPYIVGERAPYADADIRGSFTGVDGTHQRYDFVRAVLEGIIFSFRDLFDIYEENGGDFDTVVSIGGGAKSPLWLQIQADIFNRKVVSLTNEQGPGMGAAMIAATGLGWFDSLQDCAETFVHFGKAYEPNPDNVKKYEKMHAIYKQVYQQTKTISEQLLDYRRAEL.

Residue 82 to 83 (MH) participates in substrate binding. The Proton acceptor role is filled by aspartate 240.

Belongs to the FGGY kinase family.

It carries out the reaction D-xylulose + ATP = D-xylulose 5-phosphate + ADP + H(+). In terms of biological role, catalyzes the phosphorylation of D-xylulose to D-xylulose 5-phosphate. This Levilactobacillus brevis (Lactobacillus brevis) protein is Xylulose kinase.